The primary structure comprises 166 residues: NADPH-dependent 7-cyano-7-deazaguanine reductase (166 aa).

The active-site Thioimide intermediate is the Cys-57. Catalysis depends on Asp-64, which acts as the Proton donor. Residues 79 to 81 (VES) and 98 to 99 (HE) contribute to the substrate site.

It belongs to the GTP cyclohydrolase I family. QueF type 1 subfamily.

The protein resides in the cytoplasm. It catalyses the reaction 7-aminomethyl-7-carbaguanine + 2 NADP(+) = 7-cyano-7-deazaguanine + 2 NADPH + 3 H(+). Its pathway is tRNA modification; tRNA-queuosine biosynthesis. In terms of biological role, catalyzes the NADPH-dependent reduction of 7-cyano-7-deazaguanine (preQ0) to 7-aminomethyl-7-deazaguanine (preQ1). The polypeptide is NADPH-dependent 7-cyano-7-deazaguanine reductase (Alkaliphilus metalliredigens (strain QYMF)).